The following is a 703-amino-acid chain: MAPADLASEGPKLEDPPAPHLFGKCPSGLIMANVETLPVRADPGRDPLLAFAPRPAELGPPDPRLTMGSVGGGVTHAQEFPMKSVGTRTGGGGSQGSFPGPRSSGSGTNRERPGPGRYPSEDKVLANSLYLNGELRGSDHTDVCGNVVGSSGGSSSSGGSDKAPPQYREPNHPPKLLTTSGKLDQCSEPLVRPSAFKPVVPKNFHSMQNLCPPQTNGTPEGRQGPAGLKGGLEKSRTMTPAGGSGGGGLSDSGRNSLTSLPTYSSSYSQHLAPLSASTSHINRIGTPGYSSGGGGGGSGYQDLGTSDSGRASSKSGSSSSMGRSGHLGSGEGGNGGLPFAACSPPSPSALIQELEERLWEKEQEVAALRRSQEQSEAAVAQVLEERQKAWERELAELRQGCSGKLQQVARRAQRAQQGLQLQVLRLQQDKKQLQEEAAQLIRQREELEDKVAACQKEQADFLPRMEETKWEVCQKAGEISLLKQQLKDSQADVSQKLSEIVGLRSQLREGRASLREKEEQLLSLRDSFGSKQASLELSEGELPPACLKPALTPVDLVEPQEALASCESDEAKMRRQAGVAAAASLVSVDGEVDAGGEGGTRALRREVGRLQAELAAERRARERQGASFAEERRVWLEEKEKVIEYQKQLQLSYVEMYQRNQQLERRLRERGAAGGSRTPTPQHGEEEKAWTPSRLERIESTEI.

Disordered stretches follow at residues 1–22 (MAPA…PHLF), 40–190 (RADP…SEPL), and 204–347 (FHSM…PPSP). Over residues 96–107 (GSFPGPRSSGSG) the composition is skewed to low complexity. A compositionally biased stretch (basic and acidic residues) spans 109–124 (NRERPGPGRYPSEDKV). Polar residues predominate over residues 205–218 (HSMQNLCPPQTNGT). A compositionally biased stretch (low complexity) spans 251-268 (DSGRNSLTSLPTYSSSYS). A compositionally biased stretch (gly residues) spans 290-299 (SSGGGGGGSG). The segment covering 304–324 (GTSDSGRASSKSGSSSSMGRS) has biased composition (low complexity). Gly residues predominate over residues 325–336 (GHLGSGEGGNGG). 2 positions are modified to phosphoserine: Ser-346 and Ser-348. Coiled coils occupy residues 348-526 (SALI…SLRD) and 600-669 (TRAL…RLRE). Positions 665-703 (RRLRERGAAGGSRTPTPQHGEEEKAWTPSRLERIESTEI) are disordered. Residues 683–703 (HGEEEKAWTPSRLERIESTEI) show a composition bias toward basic and acidic residues.

This sequence belongs to the LZTS3 family. As to quaternary structure, interacts (via C-terminus) with SHANK3 (via PDZ domain). Interacts (via coiled coil) with SIPA1L1. Can form homooligomers. In terms of tissue distribution, detected in brain, with highest expression in brain cortex, caudate putamen, cerebellum and hippocampus. Detected in neuropil (at protein level). Detected in brain and kidney.

The protein localises to the synapse. It is found in the postsynaptic density. Its subcellular location is the cell projection. It localises to the dendritic spine. The protein resides in the dendrite. The protein localises to the cytoplasm. It is found in the cytoskeleton. In terms of biological role, may be involved in promoting the maturation of dendritic spines, probably via regulating SIPA1L1 levels at the postsynaptic density of synapses. The chain is Leucine zipper putative tumor suppressor 3 from Rattus norvegicus (Rat).